Reading from the N-terminus, the 811-residue chain is Phosphoinositide 3-kinase adapter protein 1 (811 aa).

The TIR domain occupies 8–146 (RGCDILIFYS…AVRKAISEDS (139 aa)). The segment at 10–145 (CDILIFYSPD…AAVRKAISED (136 aa)) is necessary and sufficient to mediate inhibition of NF-kappa-B downstream of activated TLRs; may mediate interaction with MYD88 and TIRAP. The interval 146-169 (SGCDSVTDTEPEDERELPFSKQTN) is disordered. The region spanning 182-318 (VQPDRIRCGA…NIPASGLHLF (137 aa)) is the DBB domain. The residue at position 264 (Y264) is a Phosphotyrosine. Residues Y420, Y445, and Y460 each carry the phosphotyrosine; by SYK modification. Residue Y513 is modified to Phosphotyrosine; by ABL1. Residues 525-551 (DLANRPPVPVPRPEASAPGPPPPPDNE) form a disordered region. A compositionally biased stretch (pro residues) spans 530–550 (PPVPVPRPEASAPGPPPPPDN). Phosphotyrosine; by ABL1 occurs at positions 553, 570, and 594. S642 is modified (phosphoserine). Y694 bears the Phosphotyrosine; by ABL1 mark. A disordered region spans residues 702 to 811 (VLPARTELRR…PPPPVPPRGR (110 aa)). Residues 707 to 716 (TELRRGDWKT) show a composition bias toward basic and acidic residues. Residues 717–740 (DSMSSTASSTSNRSSTRSLLSVSS) show a composition bias toward low complexity. Residue S718 is modified to Phosphoserine. Residues 801 to 811 (HPPPPVPPRGR) are compositionally biased toward pro residues.

In terms of assembly, homooligomer. Interacts (phosphorylated on tyrosine residues within YXXM motifs) with PIK3R1 (via SH2 domain); required for BCR- and TLR-mediated activation of phosphoinositide 3-kinase. Interacts (via polyproline C-terminal region) with ABI1 (via SH3 domain); the interaction promotes phosphorylation of PIK3AP1 by ABL1. May interact with MYD88 and TIRAP. Post-translationally, constitutively phosphorylated. Phosphorylated on tyrosine residues in C-terminal region by ABL1. Phosphorylated on tyrosine residues within the YXXM motifs by BTK and SYK. Isoform 1 and isoform 2 are phosphorylated on tyrosine residues, most likely within the YXXM motifs, via CD19 activation. Toll-like receptor activation induces appearance of a phosphorylated form associated with membranes. Predominantly expressed in spleen (at protein level). Expressed at lower levels in thymus, liver and lung. Expressed in B-cells, macrophages and natural killer (NK) cells.

It is found in the cytoplasm. Its subcellular location is the cell membrane. Its function is as follows. Signaling adapter that contributes to B-cell development by linking B-cell receptor (BCR) signaling to the phosphoinositide 3-kinase (PI3K)-Akt signaling pathway. Has a complementary role to the BCR coreceptor CD19, coupling BCR and PI3K activation by providing a docking site for the PI3K subunit PIK3R1. Alternatively, links Toll-like receptor (TLR) signaling to PI3K activation, a process preventing excessive inflammatory cytokine production. Also involved in the activation of PI3K in natural killer cells. May be involved in the survival of mature B-cells via activation of REL. This is Phosphoinositide 3-kinase adapter protein 1 (Pik3ap1) from Mus musculus (Mouse).